Reading from the N-terminus, the 80-residue chain is Large ribosomal subunit protein uL29 (80 aa).

This sequence belongs to the universal ribosomal protein uL29 family.

The protein is Large ribosomal subunit protein uL29 of Mycobacterium marinum (strain ATCC BAA-535 / M).